A 420-amino-acid chain; its full sequence is Histidine--tRNA ligase (420 aa).

It belongs to the class-II aminoacyl-tRNA synthetase family. In terms of assembly, homodimer.

It localises to the cytoplasm. It carries out the reaction tRNA(His) + L-histidine + ATP = L-histidyl-tRNA(His) + AMP + diphosphate + H(+). This chain is Histidine--tRNA ligase, found in Thermotoga sp. (strain RQ2).